The following is a 680-amino-acid chain: DNA-directed RNA polymerase subunit beta' (680 aa).

Zn(2+)-binding residues include C69, C71, C87, and C90. Positions 489, 491, and 493 each coordinate Mg(2+).

The protein belongs to the RNA polymerase beta' chain family. RpoC1 subfamily. In terms of assembly, in plastids the minimal PEP RNA polymerase catalytic core is composed of four subunits: alpha, beta, beta', and beta''. When a (nuclear-encoded) sigma factor is associated with the core the holoenzyme is formed, which can initiate transcription. Requires Mg(2+) as cofactor. Zn(2+) is required as a cofactor.

The protein localises to the plastid. It localises to the chloroplast. It carries out the reaction RNA(n) + a ribonucleoside 5'-triphosphate = RNA(n+1) + diphosphate. DNA-dependent RNA polymerase catalyzes the transcription of DNA into RNA using the four ribonucleoside triphosphates as substrates. This is DNA-directed RNA polymerase subunit beta' from Aethionema cordifolium (Lebanon stonecress).